We begin with the raw amino-acid sequence, 470 residues long: uncharacterized protein (470 aa).

The N-terminal stretch at 1–24 (MKKLVGSLAAISVLSATGFSYVGY) is a signal peptide.

This is an uncharacterized protein from Mycoplasma capricolum subsp. capricolum (strain California kid / ATCC 27343 / NCTC 10154).